The following is a 51-amino-acid chain: Small ribosomal subunit protein uS13 (51 aa).

It belongs to the universal ribosomal protein uS13 family. In terms of assembly, part of the 30S ribosomal subunit. Forms a loose heterodimer with protein S19. Forms two bridges to the 50S subunit in the 70S ribosome.

Its function is as follows. Located at the top of the head of the 30S subunit, it contacts several helices of the 16S rRNA. In the 70S ribosome it contacts the 23S rRNA (bridge B1a) and protein L5 of the 50S subunit (bridge B1b), connecting the 2 subunits; these bridges are implicated in subunit movement. Contacts the tRNAs in the A and P-sites. The chain is Small ribosomal subunit protein uS13 (rpsM) from Lactococcus lactis subsp. cremoris (Streptococcus cremoris).